A 148-amino-acid polypeptide reads, in one-letter code: Receptor activity-modifying protein 1 (148 aa).

A signal peptide spans 1-26; sequence MARALCRLPRRGLWLLLAHHLFMTTA. 3 disulfide bridges follow: Cys27/Cys82, Cys40/Cys72, and Cys57/Cys104. The Extracellular segment spans residues 27–118; it reads CQEANYGALL…RAVRDPPGSI (92 aa). The chain crosses the membrane as a helical span at residues 119-140; the sequence is LYPFIVVPITVTLLVTALVVWQ. Topologically, residues 141–148 are cytoplasmic; that stretch reads SKRTEGIV.

The protein belongs to the RAMP family. In terms of assembly, heterodimer of CALCRL and RAMP1; the interaction induces allosteric modulation of CALCRL function and CGRP1/CALCA and CGRP2/CALCB ligand specificity. Heterodimer of CALCR and RAMP1; interaction forms the AMYR1 receptor complex for amylin/IAPP and CGRP1/CALCA ligands. In terms of tissue distribution, expressed in many tissues including the uterus, bladder, brain, pancreas and gastro-intestinal tract.

It is found in the cell membrane. Its function is as follows. Accessory protein that interacts with and modulates the function of G-protein coupled receptors including calcitonin gene-related peptide type 1 receptor (CALCRL) and calcitonin receptor (CALCR). Required for the transport of CALCRL to the plasma membrane. Together with CALCRL, form the receptor complex for the calcitonin gene-related peptides CGRP1/CALCA and CGRP2/CALCB. Together with CALCR, form the AMYR1 receptor complex for amylin/IAPP and CGRP1/CALCA. In Homo sapiens (Human), this protein is Receptor activity-modifying protein 1.